The sequence spans 452 residues: Coproporphyrinogen III oxidase (452 aa).

Residues 10–15 (GGGISG), 36–37 (EP), 58–61 (GAEA), V242, W390, and 426–428 (IGV) contribute to the FAD site.

Belongs to the protoporphyrinogen/coproporphyrinogen oxidase family. Coproporphyrinogen III oxidase subfamily. Requires FAD as cofactor.

It is found in the cytoplasm. The catalysed reaction is coproporphyrinogen III + 3 O2 = coproporphyrin III + 3 H2O2. The protein operates within porphyrin-containing compound metabolism; protoheme biosynthesis. Involved in coproporphyrin-dependent heme b biosynthesis. Catalyzes the oxidation of coproporphyrinogen III to coproporphyrin III. This Mycobacterium bovis (strain ATCC BAA-935 / AF2122/97) protein is Coproporphyrinogen III oxidase.